We begin with the raw amino-acid sequence, 465 residues long: Cysteine--tRNA ligase (465 aa).

Residue Cys27 coordinates Zn(2+). Positions 29 to 39 (PTVYDDAHLGH) match the 'HIGH' region motif. Zn(2+) contacts are provided by Cys207, His237, and Glu241. Residues 269 to 273 (KMSKS) carry the 'KMSKS' region motif. Lys272 lines the ATP pocket.

Belongs to the class-I aminoacyl-tRNA synthetase family. As to quaternary structure, monomer. Requires Zn(2+) as cofactor.

It is found in the cytoplasm. It carries out the reaction tRNA(Cys) + L-cysteine + ATP = L-cysteinyl-tRNA(Cys) + AMP + diphosphate. The sequence is that of Cysteine--tRNA ligase from Helicobacter pylori (strain Shi470).